Here is a 293-residue protein sequence, read N- to C-terminus: Epidermal growth factor-like protein 8 (293 aa).

The first 28 residues, 1-28 (MGLWAELCISLRGLSFFLVLMTGEGTRG), serve as a signal peptide directing secretion. One can recognise an EMI domain in the interval 34 to 112 (SLGVCSKQTL…PHPGALTCDA (79 aa)). Intrachain disulfides connect Cys38-Cys97, Cys65-Cys71, Cys96-Cys110, Cys114-Cys124, Cys118-Cys130, Cys132-Cys141, Cys148-Cys159, Cys155-Cys168, and Cys170-Cys183. Asn50 carries N-linked (GlcNAc...) asparagine glycosylation. Residues 111 to 142 (DAICSKPCLNGGVCTGPDRCECAPGWGGKHCH) enclose the EGF-like 1 domain. In terms of domain architecture, EGF-like 2; calcium-binding spans 144 to 184 (DVDECRASLTLCSHGCLNTLGSFLCSCPHPLVLGLDGRTCA). Residues 206 to 235 (SEEERALRWEVAELRGRLEKLEQWATQAGA) are a coiled coil.

As to expression, ubiquitously expressed in brain, kidney, thymus and lung.

The protein resides in the secreted. The chain is Epidermal growth factor-like protein 8 (Egfl8) from Mus musculus (Mouse).